Here is a 317-residue protein sequence, read N- to C-terminus: Aspartate carbamoyltransferase catalytic subunit (317 aa).

Carbamoyl phosphate contacts are provided by R66 and T67. K94 provides a ligand contact to L-aspartate. Carbamoyl phosphate-binding residues include R116, H144, and Q147. The L-aspartate site is built by R177 and R231. Carbamoyl phosphate contacts are provided by G272 and P273.

The protein belongs to the aspartate/ornithine carbamoyltransferase superfamily. ATCase family. In terms of assembly, heterododecamer (2C3:3R2) of six catalytic PyrB chains organized as two trimers (C3), and six regulatory PyrI chains organized as three dimers (R2).

The enzyme catalyses carbamoyl phosphate + L-aspartate = N-carbamoyl-L-aspartate + phosphate + H(+). It functions in the pathway pyrimidine metabolism; UMP biosynthesis via de novo pathway; (S)-dihydroorotate from bicarbonate: step 2/3. Its function is as follows. Catalyzes the condensation of carbamoyl phosphate and aspartate to form carbamoyl aspartate and inorganic phosphate, the committed step in the de novo pyrimidine nucleotide biosynthesis pathway. The protein is Aspartate carbamoyltransferase catalytic subunit of Rhodopseudomonas palustris (strain BisB18).